The chain runs to 601 residues: Oligoendopeptidase F, plasmid (601 aa).

H387 is a binding site for Zn(2+). E388 is a catalytic residue. Zn(2+)-binding residues include H391 and H394.

It belongs to the peptidase M3B family. Zn(2+) is required as a cofactor.

In terms of biological role, hydrolyzes peptides containing between 7 and 17 amino acids with a rather wide specificity. The protein is Oligoendopeptidase F, plasmid (pepF1) of Lactococcus lactis subsp. cremoris (Streptococcus cremoris).